Reading from the N-terminus, the 632-residue chain is Threonine--tRNA ligase (632 aa).

The TGS domain occupies 1-61; that stretch reads MPIVTLPDGS…EHDAEVSILT (61 aa). Positions 242 to 533 are catalytic; that stretch reads DHRKLARKLD…LIEHYAGSMP (292 aa). C333, H384, and H510 together coordinate Zn(2+).

Belongs to the class-II aminoacyl-tRNA synthetase family. As to quaternary structure, homodimer. Zn(2+) serves as cofactor.

The protein resides in the cytoplasm. It carries out the reaction tRNA(Thr) + L-threonine + ATP = L-threonyl-tRNA(Thr) + AMP + diphosphate + H(+). Functionally, catalyzes the attachment of threonine to tRNA(Thr) in a two-step reaction: L-threonine is first activated by ATP to form Thr-AMP and then transferred to the acceptor end of tRNA(Thr). Also edits incorrectly charged L-seryl-tRNA(Thr). The chain is Threonine--tRNA ligase from Chromohalobacter salexigens (strain ATCC BAA-138 / DSM 3043 / CIP 106854 / NCIMB 13768 / 1H11).